A 400-amino-acid chain; its full sequence is S-adenosylmethionine synthase (400 aa).

Gly-136 to Asp-141 contacts ATP.

The protein belongs to the AdoMet synthase 2 family. It depends on Mg(2+) as a cofactor.

It catalyses the reaction L-methionine + ATP + H2O = S-adenosyl-L-methionine + phosphate + diphosphate. The protein operates within amino-acid biosynthesis; S-adenosyl-L-methionine biosynthesis; S-adenosyl-L-methionine from L-methionine: step 1/1. Its function is as follows. Catalyzes the formation of S-adenosylmethionine from methionine and ATP. In Methanospirillum hungatei JF-1 (strain ATCC 27890 / DSM 864 / NBRC 100397 / JF-1), this protein is S-adenosylmethionine synthase.